Consider the following 420-residue polypeptide: 3-phosphoshikimate 1-carboxyvinyltransferase (420 aa).

Positions 20, 21, and 25 each coordinate 3-phosphoshikimate. Residue Lys-20 participates in phosphoenolpyruvate binding. Arg-119 is a binding site for phosphoenolpyruvate. Positions 161, 162, 163, 189, 303, 326, and 330 each coordinate 3-phosphoshikimate. Gln-163 contributes to the phosphoenolpyruvate binding site. The active-site Proton acceptor is the Asp-303. Arg-334, Arg-375, and Lys-400 together coordinate phosphoenolpyruvate.

Belongs to the EPSP synthase family. As to quaternary structure, monomer.

The protein localises to the cytoplasm. The catalysed reaction is 3-phosphoshikimate + phosphoenolpyruvate = 5-O-(1-carboxyvinyl)-3-phosphoshikimate + phosphate. It functions in the pathway metabolic intermediate biosynthesis; chorismate biosynthesis; chorismate from D-erythrose 4-phosphate and phosphoenolpyruvate: step 6/7. Functionally, catalyzes the transfer of the enolpyruvyl moiety of phosphoenolpyruvate (PEP) to the 5-hydroxyl of shikimate-3-phosphate (S3P) to produce enolpyruvyl shikimate-3-phosphate and inorganic phosphate. The chain is 3-phosphoshikimate 1-carboxyvinyltransferase from Dehalococcoides mccartyi (strain ATCC BAA-2266 / KCTC 15142 / 195) (Dehalococcoides ethenogenes (strain 195)).